A 227-amino-acid polypeptide reads, in one-letter code: Cytochrome c oxidase subunit 2 (227 aa).

The Mitochondrial intermembrane portion of the chain corresponds to 1–14; it reads MAYPFQLGLQDATS. A helical transmembrane segment spans residues 15 to 45; that stretch reads PIMEELTNFHDHTLMIVFLISTLVLYIISLM. At 46-59 the chain is on the mitochondrial matrix side; sequence LTTKLTHTSTMDAQ. Residues 60–87 traverse the membrane as a helical segment; sequence EVETIWTILPAVILILIALPSLRILYMM. The Mitochondrial intermembrane segment spans residues 88–227; it reads DEINNPALTV…YFEDWSASMI (140 aa). Positions 161, 196, 198, 200, 204, and 207 each coordinate Cu cation. Residue glutamate 198 coordinates Mg(2+). The residue at position 218 (tyrosine 218) is a Phosphotyrosine.

Belongs to the cytochrome c oxidase subunit 2 family. As to quaternary structure, component of the cytochrome c oxidase (complex IV, CIV), a multisubunit enzyme composed of 14 subunits. The complex is composed of a catalytic core of 3 subunits MT-CO1, MT-CO2 and MT-CO3, encoded in the mitochondrial DNA, and 11 supernumerary subunits COX4I, COX5A, COX5B, COX6A, COX6B, COX6C, COX7A, COX7B, COX7C, COX8 and NDUFA4, which are encoded in the nuclear genome. The complex exists as a monomer or a dimer and forms supercomplexes (SCs) in the inner mitochondrial membrane with NADH-ubiquinone oxidoreductase (complex I, CI) and ubiquinol-cytochrome c oxidoreductase (cytochrome b-c1 complex, complex III, CIII), resulting in different assemblies (supercomplex SCI(1)III(2)IV(1) and megacomplex MCI(2)III(2)IV(2)). Found in a complex with TMEM177, COA6, COX18, COX20, SCO1 and SCO2. Interacts with TMEM177 in a COX20-dependent manner. Interacts with COX20. Interacts with COX16. Cu cation serves as cofactor.

It localises to the mitochondrion inner membrane. It carries out the reaction 4 Fe(II)-[cytochrome c] + O2 + 8 H(+)(in) = 4 Fe(III)-[cytochrome c] + 2 H2O + 4 H(+)(out). Its function is as follows. Component of the cytochrome c oxidase, the last enzyme in the mitochondrial electron transport chain which drives oxidative phosphorylation. The respiratory chain contains 3 multisubunit complexes succinate dehydrogenase (complex II, CII), ubiquinol-cytochrome c oxidoreductase (cytochrome b-c1 complex, complex III, CIII) and cytochrome c oxidase (complex IV, CIV), that cooperate to transfer electrons derived from NADH and succinate to molecular oxygen, creating an electrochemical gradient over the inner membrane that drives transmembrane transport and the ATP synthase. Cytochrome c oxidase is the component of the respiratory chain that catalyzes the reduction of oxygen to water. Electrons originating from reduced cytochrome c in the intermembrane space (IMS) are transferred via the dinuclear copper A center (CU(A)) of subunit 2 and heme A of subunit 1 to the active site in subunit 1, a binuclear center (BNC) formed by heme A3 and copper B (CU(B)). The BNC reduces molecular oxygen to 2 water molecules using 4 electrons from cytochrome c in the IMS and 4 protons from the mitochondrial matrix. This Hybomys univittatus (Peter's striped mouse) protein is Cytochrome c oxidase subunit 2 (MT-CO2).